The chain runs to 499 residues: Alpha-amylase A type-3 (499 aa).

Positions 1 to 21 (MMVAWWSLFLYGLQVAAPALA) are cleaved as a signal peptide. Cysteine 51 and cysteine 59 are joined by a disulfide. Tryptophan 104 contributes to the substrate binding site. Asparagine 142 contributes to the Ca(2+) binding site. Histidine 143 provides a ligand contact to substrate. The cysteines at positions 171 and 185 are disulfide-linked. Ca(2+) is bound by residues glutamate 183 and aspartate 196. N-linked (GlcNAc...) asparagine glycosylation occurs at asparagine 218. Arginine 225 contacts substrate. The Ca(2+) site is built by aspartate 227, histidine 231, and glutamate 251. The active-site Nucleophile is the aspartate 227. 230 to 231 (KH) is a binding site for substrate. The Proton donor role is filled by glutamate 251. Residue glycine 255 participates in substrate binding. Cysteine 261 and cysteine 304 are oxidised to a cystine. Residue arginine 365 participates in substrate binding. Cysteine 461 and cysteine 496 are disulfide-bonded.

The protein belongs to the glycosyl hydrolase 13 family. Monomer. Ca(2+) serves as cofactor.

The protein resides in the secreted. The catalysed reaction is Endohydrolysis of (1-&gt;4)-alpha-D-glucosidic linkages in polysaccharides containing three or more (1-&gt;4)-alpha-linked D-glucose units.. The sequence is that of Alpha-amylase A type-3 (amy3) from Aspergillus oryzae (strain ATCC 42149 / RIB 40) (Yellow koji mold).